Reading from the N-terminus, the 381-residue chain is Cytochrome b (381 aa).

Transmembrane regions (helical) follow at residues 34-54 (FGSL…MLAM), 78-99 (WMIR…YLHI), 114-134 (WNTG…GYVL), and 179-199 (FFAL…VHLT). Heme b-binding residues include His-84 and His-98. Residues His-183 and His-197 each coordinate heme b. His-202 is an a ubiquinone binding site. Helical transmembrane passes span 227-247 (MKDL…AFFT), 289-309 (LGGV…PLLH), 321-341 (MSQI…WVGS), and 348-368 (FIII…FLFP).

Belongs to the cytochrome b family. As to quaternary structure, the cytochrome bc1 complex contains 11 subunits: 3 respiratory subunits (MT-CYB, CYC1 and UQCRFS1), 2 core proteins (UQCRC1 and UQCRC2) and 6 low-molecular weight proteins (UQCRH/QCR6, UQCRB/QCR7, UQCRQ/QCR8, UQCR10/QCR9, UQCR11/QCR10 and a cleavage product of UQCRFS1). This cytochrome bc1 complex then forms a dimer. Requires heme b as cofactor.

It is found in the mitochondrion inner membrane. In terms of biological role, component of the ubiquinol-cytochrome c reductase complex (complex III or cytochrome b-c1 complex) that is part of the mitochondrial respiratory chain. The b-c1 complex mediates electron transfer from ubiquinol to cytochrome c. Contributes to the generation of a proton gradient across the mitochondrial membrane that is then used for ATP synthesis. The protein is Cytochrome b (MT-CYB) of Nothoprocta perdicaria (Chilean tinamou).